The sequence spans 85 residues: Colicin E3 immunity protein (85 aa).

Belongs to the cloacin immunity protein family. As to quaternary structure, native colicin E3 is a 1:1 complex of A chain and protein B (Im3). Binds between the translocation and cytotoxic RNase domains of intact ColE3, blocking access to the 16S rRNA substrate. Forms a very tight 1:1 complex with the cytotoxic fragment (residues 456-551) of ColE3 (ceaC).

In terms of biological role, the cognate immunity protein for colicin E3 (ColE3), protects cells which harbor the plasmid ColE3 against the toxic action of ColE3. This protein inhibits the 16S RNA hydrolyzing activity of ColE3 by binding with very high affinity to the C-terminal catalytic domain of ColE3. The protein is Colicin E3 immunity protein of Escherichia coli.